The primary structure comprises 164 residues: Glutamate uptake regulatory protein (164 aa).

Residues 5–66 (LDDFDIKILD…LLDPQKIGLG (62 aa)) enclose the HTH asnC-type domain. Positions 24-43 (MAELSEKTGLSANACWRRIR) form a DNA-binding region, H-T-H motif.

In terms of biological role, represses the secondary, H(+)-coupled glutamate uptake system (Gluemp) genes. This chain is Glutamate uptake regulatory protein (grp), found in Zymomonas mobilis subsp. mobilis (strain ATCC 31821 / ZM4 / CP4).